We begin with the raw amino-acid sequence, 424 residues long: MAAAAFDTTENFAIEMDARDPMSRFRGRFHIPPAPDGSASVYLVGHSLGLQPKTVRAYLEQELKDWETLGVEGHFRGKHPWMPYHRLLTEQTARLVCAQPSEVVVMNSLTVNLHLMMVSFYRPTRERHNILIEGSAFPSDQYAVQSQIKFHGFDPASSLLELCPRVGEATMRDEDILELIEREGQSIALILLGGVNYATGQAFDMAEITKAGHAQGCVVAFDCAHAAGNLELKLHEWDVDWAAWCSYKYLNGGPGCIGGCFVHERYARDFELPRFAGWWGHDQETRFKMGPEFHPMAGAEGWQLSNPSILTMAALRASMEIFDEAGIGKLRQRSIALTGYLEFLLDQQKSARFEIITPREPERRGAQLSIRVAAGNRSVCDRLVEEGALCDWREPDILRVAPVPLYCSYRDCYRFVQRFVANLN.

Residues leucine 109, threonine 110, 137–140 (FPSD), aspartate 222, histidine 225, and tyrosine 247 contribute to the pyridoxal 5'-phosphate site. Lysine 248 carries the post-translational modification N6-(pyridoxal phosphate)lysine. Pyridoxal 5'-phosphate contacts are provided by tryptophan 278 and asparagine 306.

The protein belongs to the kynureninase family. In terms of assembly, homodimer. It depends on pyridoxal 5'-phosphate as a cofactor.

The enzyme catalyses L-kynurenine + H2O = anthranilate + L-alanine + H(+). It carries out the reaction 3-hydroxy-L-kynurenine + H2O = 3-hydroxyanthranilate + L-alanine + H(+). Its pathway is amino-acid degradation; L-kynurenine degradation; L-alanine and anthranilate from L-kynurenine: step 1/1. It participates in cofactor biosynthesis; NAD(+) biosynthesis; quinolinate from L-kynurenine: step 2/3. In terms of biological role, catalyzes the cleavage of L-kynurenine (L-Kyn) and L-3-hydroxykynurenine (L-3OHKyn) into anthranilic acid (AA) and 3-hydroxyanthranilic acid (3-OHAA), respectively. This is Kynureninase from Koribacter versatilis (strain Ellin345).